The primary structure comprises 457 residues: PDZ and LIM domain protein 7 (457 aa).

The 85-residue stretch at 1–85 (MDSFKVVLEG…RLSLGLSRAQ (85 aa)) folds into the PDZ domain. S78 bears the Phosphoserine mark. 3 disordered regions span residues 82 to 142 (SRAQ…LVPD), 176 to 226 (TEFM…PWAV), and 239 to 258 (TSTV…LQSR). R103 is subject to Asymmetric dimethylarginine. Position 111 is a phosphoserine (S111). A compositionally biased stretch (pro residues) spans 208–221 (EPWPGPTAPSPTSR). At S247 the chain carries Phosphoserine. LIM zinc-binding domains lie at 280 to 338 (PVCH…VRYA), 339 to 398 (PSCA…MFGT), and 399 to 457 (KCHG…FSHV).

Binds via its LIM zinc-binding 3 domain (LIM 3) to endocytic codes of INSR, but not with those of IGF1R, LDLR, TFRC, or EGFR. Interacts with various PKC isoforms through the LIM zinc-binding domains. Binds to RET in a phosphorylation-independent manner via its LIM zinc-binding domain 2 (LIM 2). Probably part of a complex with SHC and the RET dimer. Interacts with TPM2. Interacts with TBX4 and TBX5. Isoform 1 and isoform 2 are expressed ubiquitously, however, isoform 2 predominates in skeletal muscle, isoform 1 is more abundant in lung, spleen, leukocytes and fetal liver.

Its subcellular location is the cytoplasm. The protein resides in the cytoskeleton. Functionally, may function as a scaffold on which the coordinated assembly of proteins can occur. May play a role as an adapter that, via its PDZ domain, localizes LIM-binding proteins to actin filaments of both skeletal muscle and nonmuscle tissues. Involved in both of the two fundamental mechanisms of bone formation, direct bone formation (e.g. embryonic flat bones mandible and cranium), and endochondral bone formation (e.g. embryonic long bone development). Plays a role during fracture repair. Involved in BMP6 signaling pathway. This Homo sapiens (Human) protein is PDZ and LIM domain protein 7 (PDLIM7).